A 413-amino-acid polypeptide reads, in one-letter code: Serine hydroxymethyltransferase (413 aa).

(6S)-5,6,7,8-tetrahydrofolate contacts are provided by residues leucine 119 and 123–125; that span reads GHL. At lysine 228 the chain carries N6-(pyridoxal phosphate)lysine. 351–353 is a (6S)-5,6,7,8-tetrahydrofolate binding site; sequence SPF.

The protein belongs to the SHMT family. As to quaternary structure, homodimer. It depends on pyridoxal 5'-phosphate as a cofactor.

The protein resides in the cytoplasm. The enzyme catalyses (6R)-5,10-methylene-5,6,7,8-tetrahydrofolate + glycine + H2O = (6S)-5,6,7,8-tetrahydrofolate + L-serine. The protein operates within one-carbon metabolism; tetrahydrofolate interconversion. It participates in amino-acid biosynthesis; glycine biosynthesis; glycine from L-serine: step 1/1. Its function is as follows. Catalyzes the reversible interconversion of serine and glycine with tetrahydrofolate (THF) serving as the one-carbon carrier. This reaction serves as the major source of one-carbon groups required for the biosynthesis of purines, thymidylate, methionine, and other important biomolecules. Also exhibits THF-independent aldolase activity toward beta-hydroxyamino acids, producing glycine and aldehydes, via a retro-aldol mechanism. The chain is Serine hydroxymethyltransferase from Anoxybacillus flavithermus (strain DSM 21510 / WK1).